A 254-amino-acid polypeptide reads, in one-letter code: MERFRWQVAAVAAVGLALALEALPSVLCWLRAGRRQQQRPPRRQVLFFPSQVTCTEALLQAPGEAPSGPPAGCRCSLPHGESSLSRLLRALLAARASLELCLFAFSSPQLGRAVQLLHQRGVRVRVITDCDYMALNGSQIGLLRKAGIQVRHDQDLGYMHHKFAIVDKKVLITGSLNWTTQAIQNNRENVLIMEDEEYVRLFLEEFERIWEEFNPTKYTFFPQKKTGTSLPPQVSCFGQLVSCHSKCSHHLSQV.

At 1–9 (MERFRWQVA) the chain is on the mitochondrial intermembrane side. The required for mitochondrial localization stretch occupies residues 1-43 (MERFRWQVAAVAAVGLALALEALPSVLCWLRAGRRQQQRPPRR). The chain crosses the membrane as a helical span at residues 10-32 (AVAAVGLALALEALPSVLCWLRA). At 33 to 254 (GRRQQQRPPR…SKCSHHLSQV (222 aa)) the chain is on the cytoplasmic side. The C3H1-type; atypical zinc finger occupies 49–82 (PSQVTCTEALLQAPGEAPSGPPAGCRCSLPHGES). Residues 155-182 (DLGYMHHKFAIVDKKVLITGSLNWTTQA) form the PLD phosphodiesterase domain. Residues His-160, Lys-162, and Asp-167 contribute to the active site.

Belongs to the phospholipase D family. MitoPLD/Zucchini subfamily. In terms of assembly, homodimer. Interacts with MOV10L1. Interacts with MIGA1 and MIGA2; possibly facilitating homodimer formation. Interacts with GK2.

The protein resides in the mitochondrion outer membrane. It localises to the nucleus membrane. Its subcellular location is the cell membrane. The protein localises to the golgi apparatus. The catalysed reaction is a cardiolipin + H2O = a 1,2-diacyl-sn-glycero-3-phospho-(1'-sn-glycerol) + a 1,2-diacyl-sn-glycero-3-phosphate + H(+). Single stranded DNA (ssDNA) hydrolase activity does not depend upon, but is stimulated by the presence of Ca(2+) and Mn(2+). MIGA1 and MIGA2 increase PLD6 self-association affinity and affects the homodimer conformation facilitating its phospholipase activity over the nuclease activity. MYC induces its expression and stimulates its phospholipase activity. In terms of biological role, presents phospholipase and nuclease activities, depending on the different physiological conditions. Interaction with Mitoguardin (MIGA1 or MIGA2) affects the dimer conformation, facilitating the lipase activity over the nuclease activity. Plays a key role in mitochondrial fusion and fission via its phospholipase activity. In its phospholipase role, it uses the mitochondrial lipid cardiolipin as substrate to generate phosphatidate (PA or 1,2-diacyl-sn-glycero-3-phosphate), a second messenger signaling lipid. Production of PA facilitates Mitofusin-mediated fusion, whereas the cleavage of PA by the Lipin family of phosphatases produces diacylgycerol (DAG) which promotes mitochondrial fission. Both Lipin and DAG regulate mitochondrial dynamics and membrane fusion/fission, important processes for adapting mitochondrial metabolism to changes in cell physiology. Mitochondrial fusion enables cells to cope with the increased nucleotide demand during DNA synthesis. Mitochondrial function and dynamics are closely associated with biological processes such as cell growth, proliferation, and differentiation. Mediator of MYC activity, promotes mitochondrial fusion and activates AMPK which in turn inhibits YAP/TAZ, thereby inducing cell growth and proliferation. The endonuclease activity plays a critical role in PIWI-interacting RNA (piRNA) biogenesis during spermatogenesis. Implicated in spermatogenesis and sperm fertility in testicular germ cells, its single strand-specific nuclease activity is critical for the biogenesis/maturation of PIWI-interacting RNA (piRNA). MOV10L1 selectively binds to piRNA precursors and funnels them to the endonuclease that catalyzes the first cleavage step of piRNA processing to generate piRNA intermediate fragments that are subsequently loaded to Piwi proteins. Cleaves either DNA or RNA substrates with similar affinity, producing a 5' phosphate end, in this way it participates in the processing of primary piRNA transcripts. piRNAs provide essential protection against the activity of mobile genetic elements. piRNA-mediated transposon silencing is thus critical for maintaining genome stability, in particular in germline cells when transposons are mobilized as a consequence of wide-spread genomic demethylation. PA may act as signaling molecule in the recognition/transport of the precursor RNAs of primary piRNAs. Interacts with tesmin in testes, suggesting a role in spermatogenesis via association with its interacting partner. This chain is Mitochondrial cardiolipin hydrolase (PLD6), found in Canis lupus familiaris (Dog).